A 182-amino-acid polypeptide reads, in one-letter code: UPF0215 protein Pcal_0119 (182 aa).

The protein belongs to the UPF0215 family.

This Pyrobaculum calidifontis (strain DSM 21063 / JCM 11548 / VA1) protein is UPF0215 protein Pcal_0119.